We begin with the raw amino-acid sequence, 404 residues long: Argininosuccinate synthase (404 aa).

9–17 (AYSGGLDTS) contributes to the ATP binding site. Position 86 (Tyr86) interacts with L-citrulline. ATP is bound at residue Gly116. Thr118, Asn122, and Asp123 together coordinate L-aspartate. Position 122 (Asn122) interacts with L-citrulline. Residues Arg126, Ser174, Ser183, Glu259, and Tyr271 each coordinate L-citrulline.

It belongs to the argininosuccinate synthase family. Type 1 subfamily. Homotetramer.

It is found in the cytoplasm. It carries out the reaction L-citrulline + L-aspartate + ATP = 2-(N(omega)-L-arginino)succinate + AMP + diphosphate + H(+). The protein operates within amino-acid biosynthesis; L-arginine biosynthesis; L-arginine from L-ornithine and carbamoyl phosphate: step 2/3. The chain is Argininosuccinate synthase from Listeria innocua serovar 6a (strain ATCC BAA-680 / CLIP 11262).